Consider the following 245-residue polypeptide: Tetraspanin-6 (245 aa).

The Cytoplasmic segment spans residues 1-19 (MASPSRRLQTKPVITCFKS). The helical transmembrane segment at 20 to 40 (VLLIYTFIFWITGVILLAVGI) threads the bilayer. The Extracellular portion of the chain corresponds to 41–59 (WGKVSLENYFSLLNEKATN). The helical transmembrane segment at 60–80 (VPFVLIATGTVIILLGTFGCF) threads the bilayer. The Cytoplasmic portion of the chain corresponds to 81-93 (ATCRASAWMLKLY). Residues 94–114 (AMFLTLIFLVELVAAIVGFVF) form a helical membrane-spanning segment. Topologically, residues 115–208 (RHEIKNSFKN…IKVMTIIESE (94 aa)) are extracellular. Asn-134 carries N-linked (GlcNAc...) asparagine glycosylation. The helical transmembrane segment at 209-229 (MGVVAGISFGVACFQLIGIFL) threads the bilayer. Residues 230–245 (AYCLSRAITNNQYEIV) lie on the Cytoplasmic side of the membrane.

Belongs to the tetraspanin (TM4SF) family.

It is found in the membrane. The chain is Tetraspanin-6 (TSPAN6) from Pongo abelii (Sumatran orangutan).